The primary structure comprises 77 residues: MNFYINQTIQINYLRLESISNSSILQIGSAGSIKSLSNLYNTGSYVEPAPEVSGSGQPLQLQEPDTGSLVPLQPPGR.

Residues 48–77 (PAPEVSGSGQPLQLQEPDTGSLVPLQPPGR) form a disordered region. Over residues 54–65 (GSGQPLQLQEPD) the composition is skewed to polar residues.

Required for the formation of functionally normal spores. Could be involved in the establishment of normal spore coat structure and/or permeability, which allows the access of germinants to their receptor. In Bacillus subtilis (strain 168), this protein is Probable spore germination protein GerPB (gerPB).